The sequence spans 442 residues: Probable glycine dehydrogenase (decarboxylating) subunit 1 (442 aa).

It belongs to the GcvP family. N-terminal subunit subfamily. In terms of assembly, the glycine cleavage system is composed of four proteins: P, T, L and H. In this organism, the P 'protein' is a heterodimer of two subunits.

It catalyses the reaction N(6)-[(R)-lipoyl]-L-lysyl-[glycine-cleavage complex H protein] + glycine + H(+) = N(6)-[(R)-S(8)-aminomethyldihydrolipoyl]-L-lysyl-[glycine-cleavage complex H protein] + CO2. In terms of biological role, the glycine cleavage system catalyzes the degradation of glycine. The P protein binds the alpha-amino group of glycine through its pyridoxal phosphate cofactor; CO(2) is released and the remaining methylamine moiety is then transferred to the lipoamide cofactor of the H protein. The polypeptide is Probable glycine dehydrogenase (decarboxylating) subunit 1 (Geotalea daltonii (strain DSM 22248 / JCM 15807 / FRC-32) (Geobacter daltonii)).